The primary structure comprises 577 residues: MSGREQTGEKLSDSEYIEEEPRRSRIGNLKKKAFSCSTKLTHPLKMRKGKRKIDFQIPLIEDVRDEKEEKLVSKLRQQLLQKDLLPPVHDDYHMLLRFLKTMEFKIEKTVTAWEEMLKWRKEFGTDRIIQDFNFKELDEVTRHYPQGYHGVDKDGRPIYIERLGKAHPGKLMEVTTIERYLKYHVQEFERTLQEKLPACSVAAKRRVTTTTTILDVEGLGMKNFTPTAANLLATIAKVDCNYYPETLHRMFIVNAGIGFRSFLWPAAQKLLDPMTIAKIQVLEPRSLSKLLEAIDSSQLPEFLGGLCKCPNEGGCLRSNKGPWNDPEIVELVHHMEVNNVPQTTTAPLHVRDYDSTTCTISPKETLKEEPEPEEYYSSTGSRSSMHTCIVPPLSDKASTSDGDKFITTVESIESAQSQLLDADTENTFANTSVREGGQILRFGALREKINSENIFHLVKILLVFPLKLFVLFGFLLPGYWQRQNTVVVPDSSTNNKVLECFDRLKKMEKEFTEISRKQVKIPEANEKLLAESLERIKSLELDLDKTKSVLHITLTKQLQITEQLESQDEERRKGCCF.

The tract at residues 1–22 is disordered; sequence MSGREQTGEKLSDSEYIEEEPR. The region spanning 136 to 311 is the CRAL-TRIO domain; that stretch reads ELDEVTRHYP…FLGGLCKCPN (176 aa). Positions 364-383 are disordered; sequence ETLKEEPEPEEYYSSTGSRS. Residues 523–550 adopt a coiled-coil conformation; the sequence is EANEKLLAESLERIKSLELDLDKTKSVL.

The protein belongs to the SFH family.

The protein localises to the golgi apparatus membrane. It localises to the cell membrane. Functionally, required for transport of secretory proteins from the Golgi complex. Catalyzes the transfer of phosphatidylinositol and phosphatidylcholine between membranes in vitro. In Arabidopsis thaliana (Mouse-ear cress), this protein is Phosphatidylinositol/phosphatidylcholine transfer protein SFH14 (SFH14).